The sequence spans 400 residues: Iron(III) enterobactin esterase (400 aa).

It belongs to the Fes family. In terms of assembly, monomer.

It is found in the cytoplasm. The catalysed reaction is Fe(III)-enterobactin + 3 H2O + H(+) = Fe(III)-[N-(2,3-dihydroxybenzoyl)-L-serine] + 2 N-(2,3-dihydroxybenzoyl)-L-serine. It catalyses the reaction Fe(III)-enterobactin + H2O = Fe(III)-[N-(2,3-dihydroxybenzoyl)-L-serine]3 + H(+). It carries out the reaction Fe(III)-[N-(2,3-dihydroxybenzoyl)-L-serine]3 + H2O + H(+) = Fe(III)-[N-(2,3-dihydroxybenzoyl)-L-serine]2 + N-(2,3-dihydroxybenzoyl)-L-serine. The enzyme catalyses Fe(III)-[N-(2,3-dihydroxybenzoyl)-L-serine]2 + H2O + H(+) = Fe(III)-[N-(2,3-dihydroxybenzoyl)-L-serine] + N-(2,3-dihydroxybenzoyl)-L-serine. The catalysed reaction is enterobactin + 3 H2O = 3 N-(2,3-dihydroxybenzoyl)-L-serine + 2 H(+). Its activity is regulated as follows. Inhibited by N-ethylmaleimide. Catalyzes the hydrolysis of ferric enterobactin (Fe-Ent). Is responsible for the release of iron from ferric enterobactin. Also catalyzes the hydrolysis of iron-free enterobactin (Ent). Cleavage of ferric enterobactin results in a mixture of three hydrolysis products, 2,3-dihydroxybenzoylserine (DHBS), the linear dimer (DHBS)2 and the linear trimer (DHBS)3, while cleavage of iron-free enterobactin yields only the monomer. Hydrolysis of ferric enterobactin is less efficient than hydrolysis of unliganded enterobactin. It also cleaves the aluminum (III) complex at a rate similar to the ferric complex. The sequence is that of Iron(III) enterobactin esterase from Escherichia coli (strain K12).